A 377-amino-acid polypeptide reads, in one-letter code: Erythronate-4-phosphate dehydrogenase (377 aa).

The substrate site is built by serine 45 and threonine 67. Residues 127 to 128 (QV), aspartate 147, and threonine 176 each bind NAD(+). Arginine 209 is a catalytic residue. NAD(+) is bound at residue aspartate 233. Glutamate 238 is a catalytic residue. Catalysis depends on histidine 255, which acts as the Proton donor. Glycine 258 contacts NAD(+). Position 259 (tyrosine 259) interacts with substrate.

This sequence belongs to the D-isomer specific 2-hydroxyacid dehydrogenase family. PdxB subfamily. As to quaternary structure, homodimer.

Its subcellular location is the cytoplasm. It carries out the reaction 4-phospho-D-erythronate + NAD(+) = (R)-3-hydroxy-2-oxo-4-phosphooxybutanoate + NADH + H(+). The protein operates within cofactor biosynthesis; pyridoxine 5'-phosphate biosynthesis; pyridoxine 5'-phosphate from D-erythrose 4-phosphate: step 2/5. Catalyzes the oxidation of erythronate-4-phosphate to 3-hydroxy-2-oxo-4-phosphonooxybutanoate. The polypeptide is Erythronate-4-phosphate dehydrogenase (Vibrio vulnificus (strain CMCP6)).